A 341-amino-acid polypeptide reads, in one-letter code: Anthranilate phosphoribosyltransferase (341 aa).

5-phospho-alpha-D-ribose 1-diphosphate contacts are provided by residues Gly-79, 82-83 (GD), Thr-87, 89-92 (NIST), 107-115 (KHGNRAASS), and Ser-119. Gly-79 provides a ligand contact to anthranilate. Mg(2+) is bound at residue Ser-91. Asn-110 serves as a coordination point for anthranilate. Anthranilate is bound at residue Arg-165. Positions 224 and 225 each coordinate Mg(2+).

It belongs to the anthranilate phosphoribosyltransferase family. In terms of assembly, homodimer. Mg(2+) serves as cofactor.

It carries out the reaction N-(5-phospho-beta-D-ribosyl)anthranilate + diphosphate = 5-phospho-alpha-D-ribose 1-diphosphate + anthranilate. Its pathway is amino-acid biosynthesis; L-tryptophan biosynthesis; L-tryptophan from chorismate: step 2/5. Functionally, catalyzes the transfer of the phosphoribosyl group of 5-phosphorylribose-1-pyrophosphate (PRPP) to anthranilate to yield N-(5'-phosphoribosyl)-anthranilate (PRA). This is Anthranilate phosphoribosyltransferase from Dehalococcoides mccartyi (strain ATCC BAA-2266 / KCTC 15142 / 195) (Dehalococcoides ethenogenes (strain 195)).